A 955-amino-acid chain; its full sequence is Glutamyl aminopeptidase (955 aa).

Topologically, residues methionine 1–histidine 17 are cytoplasmic. The chain crosses the membrane as a helical; Signal-anchor for type II membrane protein span at residues valine 18–leucine 38. The Extracellular segment spans residues glycine 39 to alanine 955. Residues asparagine 118 and asparagine 192 are each glycosylated (N-linked (GlcNAc...) asparagine). A substrate-binding site is contributed by glutamate 218. N-linked (GlcNAc...) asparagine glycosylation is found at asparagine 319 and asparagine 335. Position 352–356 (glycine 352–asparagine 356) interacts with substrate. Histidine 388 lines the Zn(2+) pocket. Glutamate 389 acts as the Proton acceptor in catalysis. Zn(2+) is bound by residues histidine 392 and glutamate 411. N-linked (GlcNAc...) asparagine glycosylation is found at asparagine 458, asparagine 547, asparagine 584, asparagine 592, asparagine 674, asparagine 759, asparagine 823, and asparagine 836. Arginine 882 contacts substrate.

It belongs to the peptidase M1 family. In terms of assembly, homodimer; disulfide-linked. Requires Zn(2+) as cofactor. N-glycosylated. Glycosylation counts for an increased mass of about 32% of the protein mass (about 48 kDa).

Its subcellular location is the cell membrane. The enzyme catalyses Release of N-terminal glutamate (and to a lesser extent aspartate) from a peptide.. With respect to regulation, substrate specificity is modulated by calcium which enhances the enzymatic activity for cleavage of acidic residues while reducing its activity with neutral and basic residues. Hydrolytic activity is inhibited by the aminopeptidase inhibitor (Leu and acidic inhibitor) amastatin, but not by bestatin (aminopeptidase inhibitor Leu inhibitor), leupeptin, pepstatin A and PMSF. Its hydrolytic activity is also strongly reduced by zinc ions, with a complete inhibition at 0.5 mM, and moderately inhibited by cobalt and copper ions. Venom protein that cleaves N-terminal acidic residues from peptides with high potency in presence of calcium. It may have several roles in venom including alteration of blood pressure by cleaving circulating angiotensin-2, general degradation of host tissue, increase of permeability to other venom components, and/or processing of other toxins in the venom. In Bitis rhinoceros (West African gaboon viper), this protein is Glutamyl aminopeptidase.